Reading from the N-terminus, the 61-residue chain is Large ribosomal subunit protein uL30 (61 aa).

This sequence belongs to the universal ribosomal protein uL30 family. As to quaternary structure, part of the 50S ribosomal subunit.

In Exiguobacterium sp. (strain ATCC BAA-1283 / AT1b), this protein is Large ribosomal subunit protein uL30.